Consider the following 437-residue polypeptide: Ribosomal protein uS12 methylthiotransferase RimO (437 aa).

Residues 5–116 form the MTTase N-terminal domain; sequence PTIAISHLGC…IVEIVERVET (112 aa). Residues cysteine 14, cysteine 50, cysteine 79, cysteine 154, cysteine 158, and cysteine 161 each contribute to the [4Fe-4S] cluster site. A Radical SAM core domain is found at 140-369; the sequence is TTSEGVAYLR…MLTQQPISER (230 aa). Residues 372–437 enclose the TRAM domain; the sequence is QAYIGQTVDV…DTYDLYGEIV (66 aa).

This sequence belongs to the methylthiotransferase family. RimO subfamily. [4Fe-4S] cluster is required as a cofactor.

Its subcellular location is the cytoplasm. It catalyses the reaction L-aspartate(89)-[ribosomal protein uS12]-hydrogen + (sulfur carrier)-SH + AH2 + 2 S-adenosyl-L-methionine = 3-methylsulfanyl-L-aspartate(89)-[ribosomal protein uS12]-hydrogen + (sulfur carrier)-H + 5'-deoxyadenosine + L-methionine + A + S-adenosyl-L-homocysteine + 2 H(+). In terms of biological role, catalyzes the methylthiolation of an aspartic acid residue of ribosomal protein uS12. The sequence is that of Ribosomal protein uS12 methylthiotransferase RimO from Microcystis aeruginosa (strain NIES-843 / IAM M-2473).